The chain runs to 258 residues: Ribosomal RNA small subunit methyltransferase A (258 aa).

S-adenosyl-L-methionine is bound by residues H13, L15, G40, E61, D85, and N106.

The protein belongs to the class I-like SAM-binding methyltransferase superfamily. rRNA adenine N(6)-methyltransferase family. RsmA subfamily.

The protein resides in the cytoplasm. The catalysed reaction is adenosine(1518)/adenosine(1519) in 16S rRNA + 4 S-adenosyl-L-methionine = N(6)-dimethyladenosine(1518)/N(6)-dimethyladenosine(1519) in 16S rRNA + 4 S-adenosyl-L-homocysteine + 4 H(+). Functionally, specifically dimethylates two adjacent adenosines (A1518 and A1519) in the loop of a conserved hairpin near the 3'-end of 16S rRNA in the 30S particle. May play a critical role in biogenesis of 30S subunits. The polypeptide is Ribosomal RNA small subunit methyltransferase A (Porphyromonas gingivalis (strain ATCC 33277 / DSM 20709 / CIP 103683 / JCM 12257 / NCTC 11834 / 2561)).